The primary structure comprises 352 residues: tRNA pseudouridine synthase D (352 aa).

The Nucleophile role is filled by Asp-78. In terms of domain architecture, TRUD spans 153-299; it reads GVPNYYGEQR…LDQDRRPLLL (147 aa).

It belongs to the pseudouridine synthase TruD family.

It catalyses the reaction uridine(13) in tRNA = pseudouridine(13) in tRNA. Functionally, responsible for synthesis of pseudouridine from uracil-13 in transfer RNAs. This Aeromonas hydrophila subsp. hydrophila (strain ATCC 7966 / DSM 30187 / BCRC 13018 / CCUG 14551 / JCM 1027 / KCTC 2358 / NCIMB 9240 / NCTC 8049) protein is tRNA pseudouridine synthase D.